Here is a 344-residue protein sequence, read N- to C-terminus: N-acetyl-gamma-glutamyl-phosphate reductase (344 aa).

C148 is a catalytic residue.

It belongs to the NAGSA dehydrogenase family. Type 1 subfamily.

The protein resides in the cytoplasm. The enzyme catalyses N-acetyl-L-glutamate 5-semialdehyde + phosphate + NADP(+) = N-acetyl-L-glutamyl 5-phosphate + NADPH + H(+). The protein operates within amino-acid biosynthesis; L-arginine biosynthesis; N(2)-acetyl-L-ornithine from L-glutamate: step 3/4. Catalyzes the NADPH-dependent reduction of N-acetyl-5-glutamyl phosphate to yield N-acetyl-L-glutamate 5-semialdehyde. The chain is N-acetyl-gamma-glutamyl-phosphate reductase from Clostridium botulinum (strain Alaska E43 / Type E3).